The following is a 697-amino-acid chain: Pentatricopeptide repeat-containing protein At2g13600 (697 aa).

PPR repeat units lie at residues 18-53, 54-84, 85-115, 116-150, 151-185, 186-216, 217-251, 252-282, 288-322, 324-349, 350-384, 385-419, 426-456, 457-491, 492-527, and 528-558; these read DSSP…GFSN, EIFI…MPQR, NIYT…MPER, DQCT…GFVL, NEYS…PFLS, DVYI…MGDR, NVVS…RVEP, DEVT…VVKN, DIIL…NVIA, TSMI…MAER, NVVS…SVCP, THYS…GFKF, DIFV…MMER, DCVS…GEKP, DHIT…GVAP, and LRDH…MPMQ. The tract at residues 563–638 is type E motif; it reads IWGSLLAACK…QPGCSWIKIQ (76 aa). Residues 639–669 are type E(+) motif; sequence GHDHVFMVKDKSHPRKKQIHSLLDILIAEMR.

Belongs to the PPR family. PCMP-E subfamily.

In Arabidopsis thaliana (Mouse-ear cress), this protein is Pentatricopeptide repeat-containing protein At2g13600 (PCMP-E76).